We begin with the raw amino-acid sequence, 196 residues long: Imidazoleglycerol-phosphate dehydratase (196 aa).

It belongs to the imidazoleglycerol-phosphate dehydratase family.

It is found in the cytoplasm. The enzyme catalyses D-erythro-1-(imidazol-4-yl)glycerol 3-phosphate = 3-(imidazol-4-yl)-2-oxopropyl phosphate + H2O. It participates in amino-acid biosynthesis; L-histidine biosynthesis; L-histidine from 5-phospho-alpha-D-ribose 1-diphosphate: step 6/9. The sequence is that of Imidazoleglycerol-phosphate dehydratase from Nitratidesulfovibrio vulgaris (strain DSM 19637 / Miyazaki F) (Desulfovibrio vulgaris).